The chain runs to 450 residues: UDP-N-acetylmuramoylalanine--D-glutamate ligase (450 aa).

Residue G119–T125 participates in ATP binding.

It belongs to the MurCDEF family.

Its subcellular location is the cytoplasm. It catalyses the reaction UDP-N-acetyl-alpha-D-muramoyl-L-alanine + D-glutamate + ATP = UDP-N-acetyl-alpha-D-muramoyl-L-alanyl-D-glutamate + ADP + phosphate + H(+). Its pathway is cell wall biogenesis; peptidoglycan biosynthesis. Functionally, cell wall formation. Catalyzes the addition of glutamate to the nucleotide precursor UDP-N-acetylmuramoyl-L-alanine (UMA). In Streptococcus pneumoniae (strain Hungary19A-6), this protein is UDP-N-acetylmuramoylalanine--D-glutamate ligase.